A 256-amino-acid chain; its full sequence is Phosphatidylglycerol--prolipoprotein diacylglyceryl transferase (256 aa).

3 helical membrane-spanning segments follow: residues 19-39 (VHWY…LGYW), 56-76 (LIFY…MLFY), and 91-111 (IWEG…AAWL). Residue R139 participates in a 1,2-diacyl-sn-glycero-3-phospho-(1'-sn-glycerol) binding. A helical membrane pass occupies residues 231-251 (FGWLTMGQVLSIPMLLIGIWL).

The protein belongs to the Lgt family.

Its subcellular location is the cell inner membrane. It catalyses the reaction L-cysteinyl-[prolipoprotein] + a 1,2-diacyl-sn-glycero-3-phospho-(1'-sn-glycerol) = an S-1,2-diacyl-sn-glyceryl-L-cysteinyl-[prolipoprotein] + sn-glycerol 1-phosphate + H(+). Its pathway is protein modification; lipoprotein biosynthesis (diacylglyceryl transfer). Catalyzes the transfer of the diacylglyceryl group from phosphatidylglycerol to the sulfhydryl group of the N-terminal cysteine of a prolipoprotein, the first step in the formation of mature lipoproteins. The polypeptide is Phosphatidylglycerol--prolipoprotein diacylglyceryl transferase (Legionella pneumophila subsp. pneumophila (strain Philadelphia 1 / ATCC 33152 / DSM 7513)).